Here is an 83-residue protein sequence, read N- to C-terminus: Exodeoxyribonuclease 7 small subunit (83 aa).

The protein belongs to the XseB family. In terms of assembly, heterooligomer composed of large and small subunits.

The protein resides in the cytoplasm. The catalysed reaction is Exonucleolytic cleavage in either 5'- to 3'- or 3'- to 5'-direction to yield nucleoside 5'-phosphates.. Functionally, bidirectionally degrades single-stranded DNA into large acid-insoluble oligonucleotides, which are then degraded further into small acid-soluble oligonucleotides. This chain is Exodeoxyribonuclease 7 small subunit, found in Rhizobium meliloti (strain 1021) (Ensifer meliloti).